A 53-amino-acid chain; its full sequence is uncharacterized protein (53 aa).

Residues 24-44 (LMTFIAVNAVLSLILIRAVIL) traverse the membrane as a helical segment.

The protein resides in the membrane. This is an uncharacterized protein from Methanocaldococcus jannaschii (strain ATCC 43067 / DSM 2661 / JAL-1 / JCM 10045 / NBRC 100440) (Methanococcus jannaschii).